Here is a 426-residue protein sequence, read N- to C-terminus: UPF0164 protein TP_0548 (426 aa).

The signal sequence occupies residues 1–37 (MISCSVRRRPRWEPQVGAAFLAFALLPVLASGRGMQA).

It belongs to the UPF0164 family.

The sequence is that of UPF0164 protein TP_0548 from Treponema pallidum (strain Nichols).